A 286-amino-acid chain; its full sequence is Eukaryotic translation initiation factor 3 subunit F-2 (286 aa).

Positions isoleucine 11–glycine 147 constitute an MPN domain.

Belongs to the eIF-3 subunit F family. Component of the eukaryotic translation initiation factor 3 (eIF-3) complex. The eIF-3 complex interacts with pix.

It is found in the cytoplasm. In terms of biological role, component of the eukaryotic translation initiation factor 3 (eIF-3) complex, which is involved in protein synthesis of a specialized repertoire of mRNAs and, together with other initiation factors, stimulates binding of mRNA and methionyl-tRNAi to the 40S ribosome. The eIF-3 complex specifically targets and initiates translation of a subset of mRNAs involved in cell proliferation. The sequence is that of Eukaryotic translation initiation factor 3 subunit F-2 from Drosophila willistoni (Fruit fly).